The chain runs to 150 residues: Protein ORF35 (150 aa).

The chain is Protein ORF35 (ORF35) from Homo sapiens (Human).